Consider the following 143-residue polypeptide: Host transcription reprogramming factor 8 (143 aa).

The N-terminal stretch at 1–19 is a signal peptide; sequence MHTYKFIQIALLFASVALA. Positions 24–34 are enriched in pro residues; sequence PSPPNPPPVPQ. Residues 24–43 form a disordered region; that stretch reads PSPPNPPPVPQLPNSETKSN. The C2H2-type 1 zinc finger occupies 48–71; the sequence is HSCEFCGVVKPSGPAYLEHYHQNH. The disordered stretch occupies residues 77–99; the sequence is GKLATPSPPNPPPVPTQKVETHA. Over residues 82–91 the composition is skewed to pro residues; sequence PSPPNPPPVP. The C2H2-type 2 zinc finger occupies 103 to 126; it reads HGCEWCNKVEPSGPAYIKHYKENH.

It localises to the secreted. The protein resides in the host nucleus. In terms of biological role, probable secreted effector that translocates into the nuclei of host cells to reprogram the expression of targeted genes by binding on effector binding elements in rice. The chain is Host transcription reprogramming factor 8 from Pyricularia oryzae (strain 70-15 / ATCC MYA-4617 / FGSC 8958) (Rice blast fungus).